The chain runs to 357 residues: Protein XRP2 (357 aa).

The segment covering 1-11 (MGCFFSKRRKP) has biased composition (basic residues). The interval 1 to 39 (MGCFFSKRRKPAQGGQQQGASQEPAAGEEKAPQYSWDQR) is disordered. Glycine 2 is lipidated: N-myristoyl glycine. Cysteine 3 is lipidated: S-palmitoyl cysteine. The segment covering 12–25 (AQGGQQQGASQEPA) has biased composition (low complexity). Residues 32 to 186 (PQYSWDQRAK…TWSNIHDFTP (155 aa)) form the C-CAP/cofactor C-like domain. GTP contacts are provided by residues 105-106 (GS) and 122-125 (QQFR).

Belongs to the TBCC family. Myristoylated on Gly-2; which may be required for membrane targeting. In terms of processing, palmitoylated on Cys-3; which may be required for plasma membrane targeting.

The protein localises to the cell membrane. Its function is as follows. Acts as a GTPase-activating protein (GAP) for tubulin in concert with tubulin-specific chaperone C, but does not enhance tubulin heterodimerization. Acts as a GTPase-activating protein. May act as guanine nucleotide dissociation inhibitor towards ADP-ribosylation factor-like proteins. In Gallus gallus (Chicken), this protein is Protein XRP2 (RP2).